A 522-amino-acid chain; its full sequence is Subtilisin-like protease 10 (522 aa).

The N-terminal stretch at 1–19 is a signal peptide; that stretch reads MFFFKGVVAVLSFFSAVNA. The propeptide occupies 20 to 117; that stretch reads APFMKPNNGT…VERDQIGTSQ (98 aa). In terms of domain architecture, Inhibitor I9 spans 36–113; it reads SYIVLLKRDI…HVAHVERDQI (78 aa). Residues 127–405 form the Peptidase S8 domain; that stretch reads NWGLGRLSNN…KLLVNGANGT (279 aa). Active-site charge relay system residues include aspartate 159 and histidine 190. Asparagine 251 is a glycosylation site (N-linked (GlcNAc...) asparagine). The Charge relay system role is filled by serine 348. A compositionally biased stretch (polar residues) spans 384–397; that stretch reads ASVKNPGPNTTNKL. A disordered region spans residues 384-515; the sequence is ASVKNPGPNT…GWNRPMWWNR (132 aa). N-linked (GlcNAc...) asparagine glycosylation is found at asparagine 392 and asparagine 403. Residues 432–459 are compositionally biased toward pro residues; that stretch reads SQNPPPGQNPPPGQNPPPEQPAPSPPAN.

The protein belongs to the peptidase S8 family.

The protein localises to the secreted. Functionally, secreted subtilisin-like serine protease with keratinolytic activity that contributes to pathogenicity. In Arthroderma benhamiae (strain ATCC MYA-4681 / CBS 112371) (Trichophyton mentagrophytes), this protein is Subtilisin-like protease 10 (SUB10).